Here is a 363-residue protein sequence, read N- to C-terminus: 3-isopropylmalate dehydrogenase (363 aa).

Position 79–92 (G79–E92) interacts with NAD(+). Residues R100, R110, R139, and D228 each coordinate substrate. Residues D228, D252, and D256 each contribute to the Mg(2+) site. G286–N298 is a binding site for NAD(+).

The protein belongs to the isocitrate and isopropylmalate dehydrogenases family. LeuB type 1 subfamily. As to quaternary structure, homodimer. The cofactor is Mg(2+). Mn(2+) serves as cofactor.

Its subcellular location is the cytoplasm. It carries out the reaction (2R,3S)-3-isopropylmalate + NAD(+) = 4-methyl-2-oxopentanoate + CO2 + NADH. The protein operates within amino-acid biosynthesis; L-leucine biosynthesis; L-leucine from 3-methyl-2-oxobutanoate: step 3/4. Functionally, catalyzes the oxidation of 3-carboxy-2-hydroxy-4-methylpentanoate (3-isopropylmalate) to 3-carboxy-4-methyl-2-oxopentanoate. The product decarboxylates to 4-methyl-2 oxopentanoate. The polypeptide is 3-isopropylmalate dehydrogenase (Aliivibrio fischeri (strain ATCC 700601 / ES114) (Vibrio fischeri)).